A 293-amino-acid polypeptide reads, in one-letter code: Sec-independent protein translocase protein TatC (293 aa).

A run of 6 helical transmembrane segments spans residues 35-55 (AAIATIIAAIIGTVFLYQPFI), 87-107 (LLKVGMYIGLVIASPVWLYQA), 123-143 (LFGFLTASIFAFACGVAISYF), 173-193 (ILKFVVTFSCAFIIPVILVGI), 204-224 (ILKSWRWVVVLVAVIAALTAP), and 228-248 (IMMMFVLMAPLLIFFFAAIGI).

Belongs to the TatC family. In terms of assembly, the Tat system comprises two distinct complexes: a TatABC complex, containing multiple copies of TatA, TatB and TatC subunits, and a separate TatA complex, containing only TatA subunits. Substrates initially bind to the TatABC complex, which probably triggers association of the separate TatA complex to form the active translocon.

Its subcellular location is the cell membrane. In terms of biological role, part of the twin-arginine translocation (Tat) system that transports large folded proteins containing a characteristic twin-arginine motif in their signal peptide across membranes. Together with TatB, TatC is part of a receptor directly interacting with Tat signal peptides. The protein is Sec-independent protein translocase protein TatC of Rothia mucilaginosa (strain DY-18) (Stomatococcus mucilaginosus).